We begin with the raw amino-acid sequence, 188 residues long: Der GTPase-activating protein YihI (188 aa).

Disordered stretches follow at residues 1–80 and 162–188; these read MKQP…VPVP and DEDD…KDTF. Basic and acidic residues predominate over residues 27–37; the sequence is TRDELDAEARD. Residues 47-57 show a composition bias toward polar residues; that stretch reads NRSGARTNVEG.

This sequence belongs to the YihI family. In terms of assembly, interacts with Der.

Its function is as follows. A GTPase-activating protein (GAP) that modifies Der/EngA GTPase function. May play a role in ribosome biogenesis. The protein is Der GTPase-activating protein YihI of Yersinia pseudotuberculosis serotype O:3 (strain YPIII).